We begin with the raw amino-acid sequence, 228 residues long: Aquaporin Z (228 aa).

The next 2 helical transmembrane spans lie at 1–21 (MLNK…GGCG) and 23–43 (AILA…ALAF). Positions 63-65 (NPA) match the NPA 1 motif. 3 helical membrane-spanning segments follow: residues 82–102 (IPYW…LYVI), 129–149 (MMAG…IILG), and 154–174 (LAPA…IHLV). The NPA 2 signature appears at 184–186 (NPA). Residues 205–225 (LFWVAPLVGAVIGAIIWKGLL) traverse the membrane as a helical segment.

The protein belongs to the MIP/aquaporin (TC 1.A.8) family. As to quaternary structure, homotetramer.

It localises to the cell inner membrane. The catalysed reaction is H2O(in) = H2O(out). In terms of biological role, channel that permits osmotically driven movement of water in both directions. It is involved in the osmoregulation and in the maintenance of cell turgor during volume expansion in rapidly growing cells. It mediates rapid entry or exit of water in response to abrupt changes in osmolarity. This Brucella abortus biovar 1 (strain 9-941) protein is Aquaporin Z.